The following is a 413-amino-acid chain: Putative zinc finger protein B0310.2 (413 aa).

2 disordered regions span residues 130–151 and 259–290; these read PIFSSDDSVKGMPSRKRAKRSL and VESDEGEIEVSPSPSTGDITENESSSSSTGPM. Residues 270-281 show a composition bias toward polar residues; the sequence is PSPSTGDITENE. 2 C2H2-type zinc fingers span residues 306–330 and 336–358; these read FICMHNNCGKRFANKFLLKKHMFIH and HTCPHCHKKFNRKDNLLRHKKTH.

It is found in the nucleus. The chain is Putative zinc finger protein B0310.2 from Caenorhabditis elegans.